The following is a 66-amino-acid chain: Conotoxin Cal5.2 (66 aa).

Residues 1 to 20 (MMYCLPVVCILLLLIPSSAT) form the signal peptide. A propeptide spanning residues 21 to 51 (FVVESRLEKDQAQSFTGDAWKRVSPIHEMIQ) is cleaved from the precursor. V65 is subject to Valine amide.

Belongs to the conotoxin T superfamily. Contains 2 disulfide bonds that can be either 'C1-C3, C2-C4' or 'C1-C4, C2-C3', since these disulfide connectivities have been observed for conotoxins with cysteine framework V (for examples, see AC P0DQQ7 and AC P81755). As to expression, expressed by the venom duct.

It localises to the secreted. Its function is as follows. Probable neurotoxin with unknown target. Possibly targets ion channels. The polypeptide is Conotoxin Cal5.2 (Californiconus californicus (California cone)).